A 469-amino-acid chain; its full sequence is UDP-N-acetylmuramate--L-alanine ligase (469 aa).

ATP is bound at residue 114-120; sequence GTHGKTT.

Belongs to the MurCDEF family.

It is found in the cytoplasm. It carries out the reaction UDP-N-acetyl-alpha-D-muramate + L-alanine + ATP = UDP-N-acetyl-alpha-D-muramoyl-L-alanine + ADP + phosphate + H(+). Its pathway is cell wall biogenesis; peptidoglycan biosynthesis. Cell wall formation. The chain is UDP-N-acetylmuramate--L-alanine ligase from Sinorhizobium fredii (strain NBRC 101917 / NGR234).